Consider the following 151-residue polypeptide: Large ribosomal subunit protein bL9 (151 aa).

This sequence belongs to the bacterial ribosomal protein bL9 family.

Binds to the 23S rRNA. This Bordetella petrii (strain ATCC BAA-461 / DSM 12804 / CCUG 43448) protein is Large ribosomal subunit protein bL9.